A 1174-amino-acid polypeptide reads, in one-letter code: ATP-dependent DNA helicase SRS2 (1174 aa).

Residues 14-316 (QLNTQQRAAA…IILVENYRSS (303 aa)) enclose the UvrD-like helicase ATP-binding domain. Position 38–43 (38–43 (GTGKTK)) interacts with ATP. Residues 222–243 (LLMYTFRLLTRVRVLSNIKHVL) are leucine-zipper. Arg-314 is an ATP binding site. A UvrD-like helicase C-terminal domain is found at 317-654 (QKILNTSEIL…TISTIHGAKG (338 aa)). A disordered region spans residues 676–704 (DDKKDESEEDEEEDQENSKKDASPKKTRV). Phosphoserine is present on Ser-833. 3 disordered regions span residues 865–896 (SKIN…SPTK), 909–973 (NVPS…DKVT), and 994–1024 (ELHP…SNSD). 2 stretches are compositionally biased toward polar residues: residues 909–922 (NVPS…STGK) and 935–955 (TDIS…NKTS). Residues 956–973 (HMSDDLMRPSPTRKDKVT) are compositionally biased toward basic and acidic residues. Low complexity predominate over residues 1007 to 1023 (SLTSSEFSGFSSACSNS).

Belongs to the helicase family. UvrD subfamily.

It localises to the nucleus. The catalysed reaction is Couples ATP hydrolysis with the unwinding of duplex DNA by translocating in the 3'-5' direction.. It catalyses the reaction ATP + H2O = ADP + phosphate + H(+). In terms of biological role, ATP-dependent DNA helicase involved in DNA repair at least for UV-induced lesions. The polarity of the helicase activity was determined to be 3' to 5'. This chain is ATP-dependent DNA helicase SRS2 (SRS2), found in Saccharomyces cerevisiae (strain ATCC 204508 / S288c) (Baker's yeast).